Consider the following 175-residue polypeptide: Protein CENTRORADIALIS-like (175 aa).

The protein belongs to the phosphatidylethanolamine-binding protein family. As to expression, expressed in tissues surrounding vascular bundles in hypocotyl of 2-week-old plants.

Its subcellular location is the cytoplasm. May form complexes with phosphorylated ligands by interfering with kinases and their effectors. Can substitute for TERMINAL FLOWER 1 (in vitro). In Arabidopsis thaliana (Mouse-ear cress), this protein is Protein CENTRORADIALIS-like (CEN).